The following is a 207-amino-acid chain: Uridine kinase (207 aa).

Residue 11–18 (GGSGSGKT) participates in ATP binding.

Belongs to the uridine kinase family.

It is found in the cytoplasm. The enzyme catalyses uridine + ATP = UMP + ADP + H(+). It catalyses the reaction cytidine + ATP = CMP + ADP + H(+). Its pathway is pyrimidine metabolism; CTP biosynthesis via salvage pathway; CTP from cytidine: step 1/3. It functions in the pathway pyrimidine metabolism; UMP biosynthesis via salvage pathway; UMP from uridine: step 1/1. This chain is Uridine kinase, found in Staphylococcus aureus (strain Mu3 / ATCC 700698).